The primary structure comprises 368 residues: Phosphate acyltransferase (368 aa).

The disordered stretch occupies residues 338–368 (GDGGHDAGGAGTASPAPGHHAEPSAAQSSKA).

The protein belongs to the PlsX family. Homodimer. Probably interacts with PlsY.

Its subcellular location is the cytoplasm. The catalysed reaction is a fatty acyl-[ACP] + phosphate = an acyl phosphate + holo-[ACP]. Its pathway is lipid metabolism; phospholipid metabolism. In terms of biological role, catalyzes the reversible formation of acyl-phosphate (acyl-PO(4)) from acyl-[acyl-carrier-protein] (acyl-ACP). This enzyme utilizes acyl-ACP as fatty acyl donor, but not acyl-CoA. In Burkholderia ambifaria (strain MC40-6), this protein is Phosphate acyltransferase.